The primary structure comprises 1033 residues: NACHT, LRR and PYD domains-containing protein 11 (1033 aa).

In terms of domain architecture, Pyrin spans 1–91 (MAESDSTDFD…CRKIIGRRNR (91 aa)). Residues 147 to 470 (LNVFLMGERA…AFLMAVPNYL (324 aa)) enclose the NACHT domain. 153 to 160 (GERASGKT) provides a ligand contact to ATP. LRR repeat units lie at residues 588 to 611 (CCHL…LIRP), 632 to 655 (MESL…ILSK), 745 to 768 (GGSL…ILCD), 802 to 827 (SPTL…TFPL), 859 to 882 (NEKL…LLCG), and 919 to 944 (LERL…LISP).

The protein belongs to the NLRP family.

Its function is as follows. Involved in inflammation. This is NACHT, LRR and PYD domains-containing protein 11 (NLRP11) from Homo sapiens (Human).